The following is a 326-amino-acid chain: Undecaprenyl-diphosphatase (326 aa).

The next 9 membrane-spanning stretches (helical) occupy residues 11–31, 42–62, 90–110, 138–158, 165–185, 212–232, 242–262, 272–292, and 304–324; these read AFSL…IAVA, TGVI…LGFI, GVAF…WYFW, LGIG…KLLV, FFRS…LLAL, ALAL…GLFI, FSFL…LKGL, ILPL…AIAW, and IFVW…GMGF.

It belongs to the UppP family.

The protein resides in the cell inner membrane. It catalyses the reaction di-trans,octa-cis-undecaprenyl diphosphate + H2O = di-trans,octa-cis-undecaprenyl phosphate + phosphate + H(+). Its function is as follows. Catalyzes the dephosphorylation of undecaprenyl diphosphate (UPP). Confers resistance to bacitracin. The protein is Undecaprenyl-diphosphatase of Synechocystis sp. (strain ATCC 27184 / PCC 6803 / Kazusa).